A 646-amino-acid polypeptide reads, in one-letter code: Cysteine-rich receptor-like protein kinase 37 (646 aa).

Positions 1-26 (MGKSCVVTSSFSLLLLFLQTLKYVHA) are cleaved as a signal peptide. 2 consecutive Gnk2-homologous domains span residues 27–132 (GFIC…NHST) and 142–252 (TINP…LYPY). The Extracellular portion of the chain corresponds to 27 to 287 (GFICYGDFFN…RDEKSFQGSN (261 aa)). N-linked (GlcNAc...) asparagine glycosylation is found at asparagine 62, asparagine 129, asparagine 169, and asparagine 180. The helical transmembrane segment at 288–308 (IAIIVVPSVINLIIFVVLIFS) threads the bilayer. Over 309–646 (WKRKQSHTII…LTRPSLSLGH (338 aa)) the chain is Cytoplasmic. A Protein kinase domain is found at 345 to 626 (FSLENKLGQG…LFWLERHATI (282 aa)). ATP contacts are provided by residues 351 to 359 (LGQGGFGSV) and lysine 373. The residue at position 418 (tyrosine 418) is a Phosphotyrosine. Aspartate 470 serves as the catalytic Proton acceptor. Phosphoserine is present on serine 474. Position 510 is a phosphothreonine (threonine 510). Tyrosine 518 carries the post-translational modification Phosphotyrosine.

Belongs to the protein kinase superfamily. Ser/Thr protein kinase family. CRK subfamily.

The protein resides in the membrane. The enzyme catalyses L-seryl-[protein] + ATP = O-phospho-L-seryl-[protein] + ADP + H(+). It catalyses the reaction L-threonyl-[protein] + ATP = O-phospho-L-threonyl-[protein] + ADP + H(+). The protein is Cysteine-rich receptor-like protein kinase 37 (CRK37) of Arabidopsis thaliana (Mouse-ear cress).